We begin with the raw amino-acid sequence, 444 residues long: Elongation factor 1-alpha (444 aa).

The tr-type G domain occupies 15-236 (KPHINLAVVG…VLDTFQPPPR (222 aa)). Residues 24–31 (GHVDNGKS) form a G1 region. Residue 24-31 (GHVDNGKS) participates in GTP binding. Ser31 contacts Mg(2+). Positions 80 to 84 (GVTIE) are G2. The tract at residues 101–104 (DLPG) is G3. Residues 101–105 (DLPGH) and 163–166 (NKMD) contribute to the GTP site. The G4 stretch occupies residues 163 to 166 (NKMD). A G5 region spans residues 202 to 204 (SAI).

Belongs to the TRAFAC class translation factor GTPase superfamily. Classic translation factor GTPase family. EF-Tu/EF-1A subfamily.

Its subcellular location is the cytoplasm. The enzyme catalyses GTP + H2O = GDP + phosphate + H(+). GTP hydrolase that promotes the GTP-dependent binding of aminoacyl-tRNA to the A-site of ribosomes during protein biosynthesis. The protein is Elongation factor 1-alpha of Pyrobaculum calidifontis (strain DSM 21063 / JCM 11548 / VA1).